The following is a 359-amino-acid chain: Type-1 angiotensin II receptor (359 aa).

Over 1 to 25 (MILNSSTEDGIKRIQDDCPKAGRHN) the chain is Extracellular. N4 carries N-linked (GlcNAc...) (complex) asparagine glycosylation. Positions 15 and 17 each coordinate angiotensin II. 2 cysteine pairs are disulfide-bonded: C18–C274 and C101–C180. The helical transmembrane segment at 26–55 (YIFVMIPTLYSIIFVVGIFGNSLVVIVIYF) threads the bilayer. At 56–61 (YMKLKT) the chain is on the cytoplasmic side. Residues 62-89 (VASVFLLNLALADLCFLLTLPLWAVYTA) traverse the membrane as a helical segment. Over 90–98 (MEYRWPFGN) the chain is Extracellular. The helical transmembrane segment at 99–125 (YLCKIASASVSFNLYASVFLLTCLSID) threads the bilayer. The Cytoplasmic segment spans residues 126–141 (RYLAIVHPMKSRLRRT). The helical transmembrane segment at 142–165 (MLVAKVTCIIIWLLAGLASLPAII) threads the bilayer. At 166–190 (HRNVFFIENTNITVCAFHYESQNST) the chain is on the extracellular side. R167 is an angiotensin II binding site. Residue N176 is glycosylated (N-linked (GlcNAc...) asparagine). Residues F182, H183, and Y184 each contribute to the angiotensin II site. N188 is a glycosylation site (N-linked (GlcNAc...) asparagine). A helical transmembrane segment spans residues 191–216 (LPIGLGLTKNILGFLFPFLIILTSYT). K199 lines the angiotensin II pocket. Residues 217-239 (LIWKALKKAYEIQKNKPRNDDIF) are Cytoplasmic-facing. Residues 240-268 (KIIMAIVLFFFFSWIPHQIFTFLDVLIQL) form a helical membrane-spanning segment. The Extracellular segment spans residues 269–278 (GIIRDCRIAD). A helical membrane pass occupies residues 279-304 (IVDTAMPITICIAYFNNCLNPLFYGF). Residues 305–359 (LGKKFKRYFLQLLKYIPPKAKSHSNLSTKMSTLSYRPSDNVSSSTKKPAPCFEVE) are Cytoplasmic-facing. The span at 335 to 350 (STLSYRPSDNVSSSTK) shows a compositional bias: polar residues. The segment at 335 to 359 (STLSYRPSDNVSSSTKKPAPCFEVE) is disordered. Residue C355 is the site of S-palmitoyl cysteine attachment.

Belongs to the G-protein coupled receptor 1 family. In terms of assembly, interacts with MAS1. Interacts with ARRB1. Interacts with FLNA (via filamin repeat 21); increases PKA-mediated phosphorylation of FLNA. Post-translationally, C-terminal Ser or Thr residues may be phosphorylated. Liver, lung, adrenal and adrenocortical adenomas.

The protein localises to the cell membrane. Its activity is regulated as follows. Strongly inhibited by anti-hypertensive drugs losartan, candesartan, valsartan, irbesartan, telmisartan, eprosartan, olmesartan and azilsartan, most of which share a common biphenyl-tetrazole scaffold. Its function is as follows. Receptor for angiotensin II, a vasoconstricting peptide, which acts as a key regulator of blood pressure and sodium retention by the kidney. The activated receptor in turn couples to G-alpha proteins G(q) (GNAQ, GNA11, GNA14 or GNA15) and thus activates phospholipase C and increases the cytosolic Ca(2+) concentrations, which in turn triggers cellular responses such as stimulation of protein kinase C. In terms of biological role, (Microbial infection) During SARS coronavirus-2/SARS-CoV-2 infection, it is able to recognize and internalize the complex formed by secreted ACE2 and SARS-CoV-2 spike protein through DNM2/dynamin 2-dependent endocytosis. This chain is Type-1 angiotensin II receptor, found in Homo sapiens (Human).